The primary structure comprises 730 residues: Arginine decarboxylase 1B, chloroplastic (730 aa).

The transit peptide at Met-1–Pro-37 directs the protein to the chloroplast. Lys-157 is subject to N6-(pyridoxal phosphate)lysine. Pyridoxal 5'-phosphate contacts are provided by residues Ser-309, Gly-346, and Glu-395–Arg-398. Residue Tyr-460–Ala-461 participates in substrate binding. Cys-548 serves as the catalytic Proton donor; shared with dimeric partner. A substrate-binding site is contributed by Asp-549. Tyr-590 contacts pyridoxal 5'-phosphate.

Belongs to the Orn/Lys/Arg decarboxylase class-II family. SpeA subfamily. Requires Mg(2+) as cofactor. Pyridoxal 5'-phosphate serves as cofactor.

The protein localises to the plastid. It is found in the chloroplast. It catalyses the reaction L-arginine + H(+) = agmatine + CO2. It participates in alkaloid biosynthesis; nicotine biosynthesis. The protein operates within amine and polyamine biosynthesis; agmatine biosynthesis; agmatine from L-arginine: step 1/1. In terms of biological role, involved in the biosynthesis of pyridine alkaloid natural products, leading mainly to the production of anabasine, anatabine, nicotine and nornicotine, effective deterrents against herbivores with antiparasitic and pesticide properties (neurotoxins); nornicotine serves as the precursor in the synthesis of the carcinogen compound N'-nitrosonornicotine (NNN). Required for the biosynthesis of putrescine. Catalyzes the first step of polyamine (PA) biosynthesis to produce putrescine from arginine. The chain is Arginine decarboxylase 1B, chloroplastic from Nicotiana tabacum (Common tobacco).